The primary structure comprises 344 residues: Fe-S cluster assembly protein DRE2 (344 aa).

The segment at 1-160 (MTSNILLLLH…KKLNNDNAST (160 aa)) is N-terminal SAM-like domain. Residues 154 to 179 (NNDNASTPGLTDSSAGTSEDETATVS) are disordered. Positions 155-170 (NDNASTPGLTDSSAGT) are enriched in polar residues. Residues 161 to 223 (PGLTDSSAGT…NDLIAESNKY (63 aa)) form a linker region. [2Fe-2S] cluster is bound by residues C231, C243, C246, and C248. A fe-S binding site A region spans residues 231–248 (CELPNGKKRKKACKDCTC). Positions 313, 316, 324, and 327 each coordinate [4Fe-4S] cluster. 2 consecutive short sequence motifs (cx2C motif) follow at residues 313 to 316 (CGSC) and 324 to 327 (CDGC). Residues 313–327 (CGSCSLGDAFRCDGC) form a fe-S binding site B region.

It belongs to the anamorsin family. In terms of assembly, monomer. Interacts with TAH18. Interacts with MIA40. It depends on [2Fe-2S] cluster as a cofactor. [4Fe-4S] cluster is required as a cofactor.

Its subcellular location is the cytoplasm. It is found in the mitochondrion intermembrane space. Component of the cytosolic iron-sulfur (Fe-S) protein assembly (CIA) machinery required for the maturation of extramitochondrial Fe-S proteins. Part of an electron transfer chain functioning in an early step of cytosolic Fe-S biogenesis, facilitating the de novo assembly of a [4Fe-4S] cluster on the scaffold complex CFD1-NBP35. Electrons are transferred to DRE2 from NADPH via the FAD- and FMN-containing protein TAH18. TAH18-DRE2 are also required for the assembly of the diferric tyrosyl radical cofactor of ribonucleotide reductase (RNR), probably by providing electrons for reduction during radical cofactor maturation in the catalytic small subunit RNR2. This is Fe-S cluster assembly protein DRE2 from Candida tropicalis (strain ATCC MYA-3404 / T1) (Yeast).